The sequence spans 436 residues: Histidine--tRNA ligase 1 (436 aa).

Belongs to the class-II aminoacyl-tRNA synthetase family. In terms of assembly, homodimer.

The protein localises to the cytoplasm. The catalysed reaction is tRNA(His) + L-histidine + ATP = L-histidyl-tRNA(His) + AMP + diphosphate + H(+). This is Histidine--tRNA ligase 1 from Bacillus cereus (strain ATCC 10987 / NRS 248).